A 458-amino-acid polypeptide reads, in one-letter code: Cysteine--tRNA ligase (458 aa).

A Zn(2+)-binding site is contributed by cysteine 29. Positions 31–41 (MTVYDLCHLGH) match the 'HIGH' region motif. Residues cysteine 213, histidine 238, and glutamate 242 each coordinate Zn(2+). The short motif at 270 to 274 (KMSKS) is the 'KMSKS' region element. Lysine 273 provides a ligand contact to ATP.

Belongs to the class-I aminoacyl-tRNA synthetase family. As to quaternary structure, monomer. The cofactor is Zn(2+).

It is found in the cytoplasm. It catalyses the reaction tRNA(Cys) + L-cysteine + ATP = L-cysteinyl-tRNA(Cys) + AMP + diphosphate. The sequence is that of Cysteine--tRNA ligase from Acidovorax sp. (strain JS42).